The chain runs to 384 residues: 1-deoxy-D-xylulose 5-phosphate reductoisomerase (384 aa).

The NADPH site is built by threonine 10, glycine 11, serine 12, isoleucine 13, asparagine 38, and asparagine 120. Lysine 121 serves as a coordination point for 1-deoxy-D-xylulose 5-phosphate. Glutamate 122 contacts NADPH. Residue aspartate 146 participates in Mn(2+) binding. 4 residues coordinate 1-deoxy-D-xylulose 5-phosphate: serine 147, glutamate 148, serine 172, and histidine 195. Residue glutamate 148 participates in Mn(2+) binding. Glycine 201 is an NADPH binding site. Serine 208, asparagine 213, lysine 214, and glutamate 217 together coordinate 1-deoxy-D-xylulose 5-phosphate. Glutamate 217 is a Mn(2+) binding site.

It belongs to the DXR family. It depends on Mg(2+) as a cofactor. Mn(2+) serves as cofactor.

The enzyme catalyses 2-C-methyl-D-erythritol 4-phosphate + NADP(+) = 1-deoxy-D-xylulose 5-phosphate + NADPH + H(+). The protein operates within isoprenoid biosynthesis; isopentenyl diphosphate biosynthesis via DXP pathway; isopentenyl diphosphate from 1-deoxy-D-xylulose 5-phosphate: step 1/6. In terms of biological role, catalyzes the NADPH-dependent rearrangement and reduction of 1-deoxy-D-xylulose-5-phosphate (DXP) to 2-C-methyl-D-erythritol 4-phosphate (MEP). This Protochlamydia amoebophila (strain UWE25) protein is 1-deoxy-D-xylulose 5-phosphate reductoisomerase.